Consider the following 104-residue polypeptide: Large ribosomal subunit protein bL21 (104 aa).

This sequence belongs to the bacterial ribosomal protein bL21 family. Part of the 50S ribosomal subunit. Contacts protein L20.

This protein binds to 23S rRNA in the presence of protein L20. The chain is Large ribosomal subunit protein bL21 from Streptococcus sanguinis (strain SK36).